The following is a 660-amino-acid chain: Protein FAM161A (660 aa).

Coiled coils occupy residues 93–120 (EEYF…YQDK) and 296–320 (YHDL…ALLA). The required for interaction with CFAP418 stretch occupies residues 341 to 525 (QLRDFLKYKK…PTVSSRGREQ (185 aa)). Residues Lys468 and Lys484 each participate in a glycyl lysine isopeptide (Lys-Gly) (interchain with G-Cter in SUMO2) cross-link. A coiled-coil region spans residues 522–552 (GREQAVRKSEKERMREYQRELEEREEKLKKR). A disordered region spans residues 605–660 (KSVTEDKESFNEEEKIEERENGEENYFIDTNSQDSYKEKDEANEESEEEKSVEESH). Residues 606–623 (SVTEDKESFNEEEKIEER) show a composition bias toward basic and acidic residues. Acidic residues predominate over residues 645–660 (EANEESEEEKSVEESH).

The protein belongs to the FAM161 family. In terms of assembly, interacts (via central region) with CFAP418 (via N-terminus); the interaction is direct. Interacts (via C-terminus) with microtubules. Interacts with LCA5. Interacts with CEP290. Interacts with SDCCAG8. Interacts with FAM161B. Interacts with POC1B. Interacts with CEP78. Forms a microtubule-associated complex with POC5, CETN2 and POC1B. Interacts with CCDC15. In terms of tissue distribution, isoform 1 and isoform 3 are widely expressed with highest levels in retina and testis, with isoform 1 being the most abundant in all tissues tested.

The protein localises to the cytoplasm. Its subcellular location is the cytoskeleton. The protein resides in the cilium basal body. It localises to the cell projection. It is found in the cilium. The protein localises to the microtubule organizing center. Its subcellular location is the centrosome. The protein resides in the centriole. Involved in ciliogenesis. The polypeptide is Protein FAM161A (FAM161A) (Homo sapiens (Human)).